The primary structure comprises 231 residues: METNVEKNSGTATEKPSLFGVITSPSVQFERIRERPAVWGPLLIVAAIIIVGAVLQSLGTDYSELLKSQDTQGLSAEQMETVATITKFGGMAGAIIGGIAALFIAPLIYWLCVKVSGGVTTYKKMLSLSLFVSLISSLGLLVNGIVAFTTDVNPLYSTTSLAGIIPSDGALASVLNTFEIFSIWSFVLLAIGLHKTGGISKKAGWISAIILFGILVVFSLFSGLINSVAGA.

5 consecutive transmembrane segments (helical) span residues 38–58 (VWGP…LQSL), 93–113 (GAII…WLCV), 128–148 (LSLF…IVAF), 171–191 (LASV…LLAI), and 205–225 (WISA…SGLI).

As to quaternary structure, interacts with a complex composed of YknX, YknY and YknZ.

The protein resides in the cell membrane. Functionally, part of an unusual four-component transporter, which is required for protection against the killing factor SdpC (sporulation-delaying protein). Has a role in the assembly of the YknXYZ complex. The protein is Membrane protein YknW (yknW) of Bacillus subtilis (strain 168).